The following is a 326-amino-acid chain: Putative ribose-phosphate pyrophosphokinase 2 (326 aa).

ATP-binding positions include 43–45 and 102–103; these read DGE and RQ. His136 provides a ligand contact to Mg(2+). Residues Asp226 and 230–234 contribute to the D-ribose 5-phosphate site; that span reads NTGKT.

This sequence belongs to the ribose-phosphate pyrophosphokinase family. Class I subfamily. Homohexamer. Mg(2+) is required as a cofactor.

It is found in the cytoplasm. It carries out the reaction D-ribose 5-phosphate + ATP = 5-phospho-alpha-D-ribose 1-diphosphate + AMP + H(+). It participates in metabolic intermediate biosynthesis; 5-phospho-alpha-D-ribose 1-diphosphate biosynthesis; 5-phospho-alpha-D-ribose 1-diphosphate from D-ribose 5-phosphate (route I): step 1/1. Its function is as follows. Involved in the biosynthesis of the central metabolite phospho-alpha-D-ribosyl-1-pyrophosphate (PRPP) via the transfer of pyrophosphoryl group from ATP to 1-hydroxyl of ribose-5-phosphate (Rib-5-P). This Streptococcus mutans serotype c (strain ATCC 700610 / UA159) protein is Putative ribose-phosphate pyrophosphokinase 2.